The sequence spans 494 residues: Chromosomal replication initiator protein DnaA (494 aa).

The segment at 1-103 (MTTDPDPPFV…PVSDESDSGS (103 aa)) is domain I, interacts with DnaA modulators. Residues 94–117 (PVSDESDSGSVASPAPVAAADPDD) are disordered. The span at 101 to 113 (SGSVASPAPVAAA) shows a compositional bias: low complexity. The domain II stretch occupies residues 104–153 (VASPAPVAAADPDDDVVDDDLAARASAEESWPSYFTNRANRAAEDDATSV). A domain III, AAA+ region region spans residues 154-370 (NLNRRYTFDT…GALIRVTAFA (217 aa)). G198, G200, K201, and T202 together coordinate ATP. The tract at residues 371–494 (SLNKTPIDKS…TTRIRQRAKR (124 aa)) is domain IV, binds dsDNA.

This sequence belongs to the DnaA family. As to quaternary structure, oligomerizes as a right-handed, spiral filament on DNA at oriC.

The protein localises to the cytoplasm. Its function is as follows. Plays an essential role in the initiation and regulation of chromosomal replication. ATP-DnaA binds to the origin of replication (oriC) to initiate formation of the DNA replication initiation complex once per cell cycle. Binds the DnaA box (a 9 base pair repeat at the origin) and separates the double-stranded (ds)DNA. Forms a right-handed helical filament on oriC DNA; dsDNA binds to the exterior of the filament while single-stranded (ss)DNA is stabiized in the filament's interior. The ATP-DnaA-oriC complex binds and stabilizes one strand of the AT-rich DNA unwinding element (DUE), permitting loading of DNA polymerase. After initiation quickly degrades to an ADP-DnaA complex that is not apt for DNA replication. Binds acidic phospholipids. The protein is Chromosomal replication initiator protein DnaA of Mycolicibacterium vanbaalenii (strain DSM 7251 / JCM 13017 / BCRC 16820 / KCTC 9966 / NRRL B-24157 / PYR-1) (Mycobacterium vanbaalenii).